Reading from the N-terminus, the 182-residue chain is Peptide deformylase (182 aa).

2 residues coordinate Fe cation: cysteine 110 and histidine 153. The active site involves glutamate 154. Fe cation is bound at residue histidine 157.

The protein belongs to the polypeptide deformylase family. The cofactor is Fe(2+).

The catalysed reaction is N-terminal N-formyl-L-methionyl-[peptide] + H2O = N-terminal L-methionyl-[peptide] + formate. Removes the formyl group from the N-terminal Met of newly synthesized proteins. Requires at least a dipeptide for an efficient rate of reaction. N-terminal L-methionine is a prerequisite for activity but the enzyme has broad specificity at other positions. This Halalkalibacterium halodurans (strain ATCC BAA-125 / DSM 18197 / FERM 7344 / JCM 9153 / C-125) (Bacillus halodurans) protein is Peptide deformylase.